We begin with the raw amino-acid sequence, 210 residues long: Syntaxin-binding protein 6 (210 aa).

Ser-2 carries the N-acetylserine modification. Residues 151-210 (GNSILHSAADSVTSAVQKASQALNERGERLGRAEEKTEDLKNSAQQFAETAHKLAMKHKC) enclose the v-SNARE coiled-coil homology domain.

As to quaternary structure, part of a ternary complex containing SNAP25 and STX1A that can be dissociated by NAPA and NSF. Interacts with STX4A.

It localises to the cytoplasm. It is found in the membrane. In terms of biological role, forms non-fusogenic complexes with SNAP25 and STX1A and may thereby modulate the formation of functional SNARE complexes and exocytosis. The sequence is that of Syntaxin-binding protein 6 (STXBP6) from Bos taurus (Bovine).